Here is a 298-residue protein sequence, read N- to C-terminus: ADP/ATP translocase 1 (298 aa).

The Mitochondrial intermembrane segment spans residues 1-7; sequence MGDQALS. At Gly-2 the chain carries N-acetylglycine. The Solcar 1 repeat unit spans residues 6–98; it reads LSFLKDFLAG…FAFKDKYKQI (93 aa). Position 7 is a phosphoserine (Ser-7). The helical transmembrane segment at 8 to 37 threads the bilayer; the sequence is FLKDFLAGGIAAAVSKTAVAPIERVKLLLQ. Residues 38–74 lie on the Mitochondrial matrix side of the membrane; that stretch reads VQHASKQISAEKQYKGIIDCVVRIPKEQGFLSFWRGN. Lys-52 carries the N6,N6,N6-trimethyllysine modification. The chain crosses the membrane as a helical span at residues 75-99; that stretch reads LANVIRYFPTQALNFAFKDKYKQIF. ADP is bound by residues Arg-80 and Lys-92. Residues 100-109 lie on the Mitochondrial intermembrane side of the membrane; that stretch reads LGGVDRHKQF. A helical transmembrane segment spans residues 110-130; the sequence is WRYFAGNLASGGAAGATSLCF. 2 Solcar repeats span residues 111–201 and 212–297; these read RYFA…AKGM and VSWM…IKKY. Topologically, residues 131-178 are mitochondrial matrix; sequence VYPLDFARTRLAADVGKGSSQREFNGLGDCLTKIFKSDGLKGLYQGFS. Residue Lys-147 is modified to N6-succinyllysine. Ser-149 and Ser-150 each carry phosphoserine. An S-nitrosocysteine modification is found at Cys-160. Residues 179–199 form a helical membrane-spanning segment; the sequence is VSVQGIIIYRAAYFGVYDTAK. The Mitochondrial intermembrane portion of the chain corresponds to 200–210; that stretch reads GMLPDPKNVHI. The helical transmembrane segment at 211–231 threads the bilayer; sequence IVSWMIAQSVTAVAGLVSYPF. The Mitochondrial matrix portion of the chain corresponds to 232-273; that stretch reads DTVRRRMMMQSGRKGADIMYTGTVDCWRKIAKDEGRKAFFKG. Position 235 (Arg-235) interacts with ADP. The tract at residues 235–240 is important for transport activity; it reads RRRMMM. The Nucleotide carrier signature motif motif lies at 235–240; sequence RRRMMM. 2 positions are modified to N6-succinyllysine: Lys-245 and Lys-272. Residues 274–291 traverse the membrane as a helical segment; the sequence is AWSNVLRGMGGAFVLVLY. The Mitochondrial intermembrane segment spans residues 292–298; the sequence is DEIKKYV.

It belongs to the mitochondrial carrier (TC 2.A.29) family. As to quaternary structure, monomer. Found in a complex with ARL2, ARL2BP and SLC25A4/ANT1. Interacts with ARL2BP. Interacts with TIMM44; leading to inhibit the presequence translocase TIMM23, thereby promoting stabilization of PINK1. Under cell death induction, transglutaminated by TGM2. Transglutamination leads to formation of covalent cross-links between a glutamine and the epsilon-amino group of a lysine residue, forming polymers.

The protein localises to the mitochondrion inner membrane. It localises to the membrane. The catalysed reaction is ADP(in) + ATP(out) = ADP(out) + ATP(in). The enzyme catalyses H(+)(in) = H(+)(out). With respect to regulation, the matrix-open state (m-state) is inhibited by the membrane-permeable bongkrekic acid (BKA). The cytoplasmic-open state (c-state) is inhibited by the membrane-impermeable toxic inhibitor carboxyatractyloside (CATR). Proton transporter activity is inhibited by ADP:ATP antiporter activity. Its function is as follows. ADP:ATP antiporter that mediates import of ADP into the mitochondrial matrix for ATP synthesis, and export of ATP out to fuel the cell. Cycles between the cytoplasmic-open state (c-state) and the matrix-open state (m-state): operates by the alternating access mechanism with a single substrate-binding site intermittently exposed to either the cytosolic (c-state) or matrix (m-state) side of the inner mitochondrial membrane. In addition to its ADP:ATP antiporter activity, also involved in mitochondrial uncoupling and mitochondrial permeability transition pore (mPTP) activity. Plays a role in mitochondrial uncoupling by acting as a proton transporter: proton transport uncouples the proton flows via the electron transport chain and ATP synthase to reduce the efficiency of ATP production and cause mitochondrial thermogenesis. Proton transporter activity is inhibited by ADP:ATP antiporter activity, suggesting that SLC25A4/ANT1 acts as a master regulator of mitochondrial energy output by maintaining a delicate balance between ATP production (ADP:ATP antiporter activity) and thermogenesis (proton transporter activity). Proton transporter activity requires free fatty acids as cofactor, but does not transport it. Also plays a key role in mPTP opening, a non-specific pore that enables free passage of the mitochondrial membranes to solutes of up to 1.5 kDa, and which contributes to cell death. It is however unclear if SLC25A4/ANT1 constitutes a pore-forming component of mPTP or regulates it. Acts as a regulator of mitophagy independently of ADP:ATP antiporter activity: promotes mitophagy via interaction with TIMM44, leading to inhibit the presequence translocase TIMM23, thereby promoting stabilization of PINK1. The protein is ADP/ATP translocase 1 of Rattus norvegicus (Rat).